The following is a 401-amino-acid chain: 8-amino-7-oxononanoate synthase (401 aa).

Arg-24 serves as a coordination point for substrate. Pyridoxal 5'-phosphate is bound at residue 111-112 (GF). Residue His-137 coordinates substrate. Residues Ser-183, His-211, and Thr-240 each contribute to the pyridoxal 5'-phosphate site. At Lys-243 the chain carries N6-(pyridoxal phosphate)lysine. Thr-357 serves as a coordination point for substrate.

It belongs to the class-II pyridoxal-phosphate-dependent aminotransferase family. BioF subfamily. Homodimer. It depends on pyridoxal 5'-phosphate as a cofactor.

It carries out the reaction 6-carboxyhexanoyl-[ACP] + L-alanine + H(+) = (8S)-8-amino-7-oxononanoate + holo-[ACP] + CO2. Its pathway is cofactor biosynthesis; biotin biosynthesis. Its function is as follows. Catalyzes the decarboxylative condensation of pimeloyl-[acyl-carrier protein] and L-alanine to produce 8-amino-7-oxononanoate (AON), [acyl-carrier protein], and carbon dioxide. This Xylella fastidiosa (strain 9a5c) protein is 8-amino-7-oxononanoate synthase.